A 332-amino-acid polypeptide reads, in one-letter code: UDP-N-acetylenolpyruvoylglucosamine reductase (332 aa).

Positions 45-243 (RAGGHAAYFY…LGTRIKTQPL (199 aa)) constitute an FAD-binding PCMH-type domain. The active site involves Arg-194. Ser-250 acts as the Proton donor in catalysis. Glu-320 is an active-site residue.

Belongs to the MurB family. The cofactor is FAD.

The protein resides in the cytoplasm. The enzyme catalyses UDP-N-acetyl-alpha-D-muramate + NADP(+) = UDP-N-acetyl-3-O-(1-carboxyvinyl)-alpha-D-glucosamine + NADPH + H(+). It participates in cell wall biogenesis; peptidoglycan biosynthesis. In terms of biological role, cell wall formation. The sequence is that of UDP-N-acetylenolpyruvoylglucosamine reductase from Nitrosomonas eutropha (strain DSM 101675 / C91 / Nm57).